A 183-amino-acid chain; its full sequence is Gamma-crystallin N-A (183 aa).

Beta/gamma crystallin 'Greek key' domains lie at glycine 6 to serine 46, glycine 47 to lysine 89, tyrosine 95 to glycine 136, and glycine 138 to valine 180.

This sequence belongs to the beta/gamma-crystallin family. Monomer.

Crystallins are the dominant structural components of the vertebrate eye lens. This Danio rerio (Zebrafish) protein is Gamma-crystallin N-A (crygna).